Here is a 583-residue protein sequence, read N- to C-terminus: Pectinesterase/pectinesterase inhibitor U1 (583 aa).

The first 40 residues, 1–40, serve as a signal peptide directing secretion; the sequence is MTRVEDFFSKQIDFCKRKKKIYLAIVASVLLVAAVIGVVA. The pectinesterase inhibitor U1 stretch occupies residues 60–221; it reads SSAHAIVKSA…EKMCSNALAM (162 aa). N-linked (GlcNAc...) asparagine glycans are attached at residues Asn85, Asn105, and Asn224. Residues 272–570 form a pectinesterase U1 region; the sequence is DVVVAADGSG…TPGRFIAGGS (299 aa). Positions 347 and 377 each coordinate substrate. Asp400 serves as the catalytic Proton donor; for pectinesterase activity. Cys414 and Cys434 are joined by a disulfide. Asp421 functions as the Nucleophile; for pectinesterase activity in the catalytic mechanism. Substrate-binding residues include Arg489 and Trp491.

In the N-terminal section; belongs to the PMEI family. It in the C-terminal section; belongs to the pectinesterase family.

Its subcellular location is the secreted. It localises to the cell wall. It carries out the reaction [(1-&gt;4)-alpha-D-galacturonosyl methyl ester](n) + n H2O = [(1-&gt;4)-alpha-D-galacturonosyl](n) + n methanol + n H(+). Its pathway is glycan metabolism; pectin degradation; 2-dehydro-3-deoxy-D-gluconate from pectin: step 1/5. Acts in the modification of cell walls via demethylesterification of cell wall pectin. The sequence is that of Pectinesterase/pectinesterase inhibitor U1 (PMEU1) from Solanum lycopersicum (Tomato).